Here is a 295-residue protein sequence, read N- to C-terminus: GDP-polyphosphate phosphotransferase (295 aa).

A disordered region spans residues 1-28; the sequence is MDIPSVDVSTATNDGASSRAKGHRSAAP. Positions 7–16 are enriched in polar residues; it reads DVSTATNDGA. A phosphohistidine mark is found at His115 and His247.

It belongs to the polyphosphate kinase 2 (PPK2) family. Class I subfamily. In terms of assembly, interacts with Ndk. In terms of processing, autophosphorylated at His-115 and His-247 using polyP as a phosphate donor.

The enzyme catalyses [phosphate](n) + GTP = [phosphate](n+1) + GDP. Uses inorganic polyphosphate (polyP) as a donor to convert GDP to GTP. In addition, modulates nucleotide triphosphate synthesis catalyzed by the nucleoside diphosphate kinase (Ndk) in favor of GTP production over CTP or UTP. Plays an important role in survival of M.tuberculosis in macrophages. This Mycobacterium tuberculosis (strain ATCC 25618 / H37Rv) protein is GDP-polyphosphate phosphotransferase.